The primary structure comprises 103 residues: Large ribosomal subunit protein bL21 (103 aa).

This sequence belongs to the bacterial ribosomal protein bL21 family. Part of the 50S ribosomal subunit. Contacts protein L20.

In terms of biological role, this protein binds to 23S rRNA in the presence of protein L20. This chain is Large ribosomal subunit protein bL21, found in Shewanella pealeana (strain ATCC 700345 / ANG-SQ1).